The following is a 469-amino-acid chain: Argininosuccinate lyase (469 aa).

It belongs to the lyase 1 family. Argininosuccinate lyase subfamily.

Its subcellular location is the cytoplasm. The enzyme catalyses 2-(N(omega)-L-arginino)succinate = fumarate + L-arginine. It participates in amino-acid biosynthesis; L-arginine biosynthesis; L-arginine from L-ornithine and carbamoyl phosphate: step 3/3. This is Argininosuccinate lyase from Burkholderia cenocepacia (strain ATCC BAA-245 / DSM 16553 / LMG 16656 / NCTC 13227 / J2315 / CF5610) (Burkholderia cepacia (strain J2315)).